A 161-amino-acid chain; its full sequence is Allophycocyanin subunit alpha-B (161 aa).

N4-methylasparagine is present on Asn71. Cys81 serves as a coordination point for (2R,3E)-phycocyanobilin.

The protein belongs to the phycobiliprotein family. In terms of assembly, heterodimer of an alpha-B and a beta chain forming AP-B. Contains one covalently linked bilin chromophore. The chromophore is added by phycocyanobilin lyase CpcUS.

The protein localises to the cellular thylakoid membrane. Its function is as follows. A variant alpha-allophycocyanin (AP) which forms a complex with beta-AP with maximum absorption at approximately 670 nanometers. It is an important phycobilisome terminal emitter involved in energy transfer to photosystem I. This chain is Allophycocyanin subunit alpha-B (apcD), found in Picosynechococcus sp. (strain ATCC 27264 / PCC 7002 / PR-6) (Agmenellum quadruplicatum).